We begin with the raw amino-acid sequence, 333 residues long: MATIKDVAKLASVSTTTVSHVINKTRFVAEATQKRVWEAVEELNYAPSAVARSLKCNTTRTIGMLVTQSFNPFFAEMMHGVENYCYKQGYTLFMCNTEGDLDKQKHYLRMLAEKRVDGLLVMCSDLNEQLLAQLEKNTELPMVIMDWGPDSPHTDKIIDNSEEGGYLATKHLIENGHTKIGCVTGQLDKATCKERIHGFYRALSEANLTSNPDWIFEGDFECSSASKSVEKMLQMEDKPTALFCFNDIMALAAISKIQQTGLRVPEDISIIGYDNIELSAYFSPPLTTIHQPKRRVGKTAVEILLERIKDKHHERRIFEMHPEVVTRKSVHKL.

In terms of domain architecture, HTH lacI-type spans 2-56; sequence ATIKDVAKLASVSTTTVSHVINKTRFVAEATQKRVWEAVEELNYAPSAVARSLKC. Positions 4-23 form a DNA-binding region, H-T-H motif; it reads IKDVAKLASVSTTTVSHVIN. A DNA-binding region spans residues 48 to 56; the sequence is SAVARSLKC. Hypoxanthine-binding residues include Phe73, Lys189, Thr191, Phe220, and Asp274.

In terms of assembly, homodimer.

It functions in the pathway purine metabolism; purine nucleotide biosynthesis [regulation]. Is the main repressor of the genes involved in the de novo synthesis of purine nucleotides, regulating purB, purC, purEK, purF, purHD, purL, purMN and guaBA expression. PurR is allosterically activated to bind its cognate DNA by binding the purine corepressors, hypoxanthine or guanine, thereby effecting transcription repression. This Aliivibrio salmonicida (strain LFI1238) (Vibrio salmonicida (strain LFI1238)) protein is HTH-type transcriptional repressor PurR.